The primary structure comprises 327 residues: Zinc transport protein ZntB (327 aa).

Residues 1-273 (MEAIKGSDVN…ARRTYTMSLM (273 aa)) are Cytoplasmic-facing. Residues 274–294 (AMVFLPSTFLTGLFGVNLGGI) traverse the membrane as a helical segment. Residues 295–300 (PGGGWR) lie on the Periplasmic side of the membrane. A helical transmembrane segment spans residues 301-321 (FGFSLFCILLVVLIGGVTLWL). The Cytoplasmic segment spans residues 322-327 (HRSKWL).

It belongs to the CorA metal ion transporter (MIT) (TC 1.A.35) family.

It is found in the cell inner membrane. The enzyme catalyses Zn(2+)(out) + H(+)(out) = Zn(2+)(in) + H(+)(in). Zinc transporter. Acts as a Zn(2+):proton symporter, which likely mediates zinc ion uptake. The protein is Zinc transport protein ZntB of Salmonella agona (strain SL483).